Here is a 331-residue protein sequence, read N- to C-terminus: Probable cytosolic iron-sulfur protein assembly protein Ciao1 (331 aa).

WD repeat units lie at residues 12–51, 57–96, 97–136, 142–181, 188–227, 246–285, and 297–331; these read GHKG…WTTK, GHKR…ATLE, GHEN…EFEC, AHSQ…SDWD, SHTS…NEAG, LHTR…KRDA, and AHEQ…KLQE.

It belongs to the WD repeat CIA1 family.

In terms of biological role, essential component of the cytosolic iron-sulfur (Fe/S) protein assembly machinery. Required for the maturation of extramitochondrial Fe/S proteins. The polypeptide is Probable cytosolic iron-sulfur protein assembly protein Ciao1 (Drosophila mojavensis (Fruit fly)).